Reading from the N-terminus, the 592-residue chain is Sodium- and chloride-dependent transporter XTRP3A (592 aa).

At 1–7 the chain is on the cytoplasmic side; sequence MEKARPQ. The helical transmembrane segment at 8 to 28 threads the bilayer; sequence WGHPLQFVFACISYAVGLGNV. At 29 to 42 the chain is on the extracellular side; that stretch reads WRFPYLCQMYGGGS. The helical transmembrane segment at 43–63 threads the bilayer; the sequence is FLVPYIIMLIVEGMPLLYLEL. Topologically, residues 64-79 are cytoplasmic; that stretch reads AVGQRMRQGSIGAWRT. Residues 80–100 form a helical membrane-spanning segment; sequence ISPYLSGVGVASVVVSFFLSM. Residues 101–165 are Extracellular-facing; sequence YYNVINAWGF…ISPSIQENGG (65 aa). Asn131 is a glycosylation site (N-linked (GlcNAc...) asparagine). A helical transmembrane segment spans residues 166-186; that stretch reads VQWEPALCLTLAWLMVYLCIL. The Cytoplasmic segment spans residues 187–194; it reads RGTESTGK. A helical transmembrane segment spans residues 195–215; sequence VVYFTASMPYCVLIIYLVRGL. At 216 to 241 the chain is on the extracellular side; that stretch reads TLHGATNGLMYMFTPKMEQLANPKAW. The chain crosses the membrane as a helical span at residues 242–262; it reads INAATQIFFSLGLGFGSLIAF. Residues 263 to 276 are Cytoplasmic-facing; that stretch reads ASYNEPSNNCQKHA. Residues 277–297 traverse the membrane as a helical segment; the sequence is IIVSIINSSTSIFASIVTFSI. At 298–389 the chain is on the extracellular side; it reads YGFKATFNYE…EAIKNMEVSQ (92 aa). Residues 390–410 form a helical membrane-spanning segment; that stretch reads LWSVLYFFMLLMLGIGSMLGN. Residues 411–431 lie on the Cytoplasmic side of the membrane; sequence TAAILTPLTDSKVISSYLPKE. A helical membrane pass occupies residues 432-452; that stretch reads AISGLVCLINCAVGMVFTMEA. Residues 453 to 465 are Extracellular-facing; sequence GNYWFDIFNDYAA. A helical membrane pass occupies residues 466–486; it reads TLSLLLIVLVETIAVCYVYGL. Residues 487–504 lie on the Cytoplasmic side of the membrane; the sequence is KRFESDLRAMTGRTLSWY. A helical membrane pass occupies residues 505-525; sequence WKVMWAFVSPLLIVGLFIFYL. Over 526 to 554 the chain is Extracellular; the sequence is SDYILTGTLQYQAWDATQGQLVTKDYPPH. The chain crosses the membrane as a helical span at residues 555 to 575; that stretch reads ALAVIGLLVASSTMCIPLVAL. Residues 576 to 592 lie on the Cytoplasmic side of the membrane; the sequence is GTFIRNRLKRGGSAPVA.

The protein belongs to the sodium:neurotransmitter symporter (SNF) (TC 2.A.22) family. SLC6A20 subfamily. As to expression, expressed in brain, kidney, small intestine, thymus, spleen and lung. In the brain, expressed in cerebellum, cortex and brain stem. Not detected in liver, muscle or heart. In brain, widespread in various regions, including the meninges, choroid plexus, cortex, hippocampus and thalamus.

It is found in the apical cell membrane. The catalysed reaction is L-proline(out) + chloride(out) + 2 Na(+)(out) = L-proline(in) + chloride(in) + 2 Na(+)(in). The enzyme catalyses 4-hydroxy-L-proline(out) + chloride(out) + 2 Na(+)(out) = 4-hydroxy-L-proline(in) + chloride(in) + 2 Na(+)(in). It catalyses the reaction 2-methyl-2-(methylamino)propanoate(out) + chloride(out) + 2 Na(+)(out) = 2-methyl-2-(methylamino)propanoate(in) + chloride(in) + 2 Na(+)(in). It carries out the reaction L-pipecolate(out) + chloride(out) + 2 Na(+)(out) = L-pipecolate(in) + chloride(in) + 2 Na(+)(in). The catalysed reaction is glycine betaine(out) + chloride(out) + 2 Na(+)(out) = glycine betaine(in) + chloride(in) + 2 Na(+)(in). The enzyme catalyses glycine(out) + chloride(out) + 2 Na(+)(out) = glycine(in) + chloride(in) + 2 Na(+)(in). Mediates the Na(+)- and Cl(-)-dependent uptake of imino acids such as L-proline, N-methyl-L-proline and pipecolate as well as N-methylated amino acids. Also transports glycine, regulates proline and glycine homeostasis in the brain playing a role in the modulation of NMDAR currents. This Mus musculus (Mouse) protein is Sodium- and chloride-dependent transporter XTRP3A.